The primary structure comprises 204 residues: Tat proofreading chaperone DmsD (204 aa).

Belongs to the TorD/DmsD family. DmsD subfamily.

Functionally, required for biogenesis/assembly of DMSO reductase, but not for the interaction of the DmsA signal peptide with the Tat system. May be part of a chaperone cascade complex that facilitates a folding-maturation pathway for the substrate protein. The chain is Tat proofreading chaperone DmsD from Salmonella paratyphi A (strain ATCC 9150 / SARB42).